A 712-amino-acid chain; its full sequence is Aryl hydrocarbon receptor nuclear translocator 2 (712 aa).

2 disordered regions span residues 1–20 (MATPAAVNPPEMASDIPGSV) and 35–74 (MAGAMPARGGKRRSGMDFDDEDGEGPSKFSRENHSEIERR). Arg42 carries the post-translational modification Omega-N-methylarginine. Residues 63-73 (FSRENHSEIER) show a composition bias toward basic and acidic residues. Residues 63–116 (FSRENHSEIERRRRNKMTQYITELSDMVPTCSALARKPDKLTILRMAVSHMKSM) form the bHLH domain. 2 consecutive PAS domains span residues 134–209 (TEQE…MTGR) and 323–393 (PVCM…VKLK). The PAC domain maps to 398 to 441 (SVMYRFRTKNREWLLIRTSSFTFQNPYSDEIEYVICTNTNVKQL). Residues 573 to 712 (AWTGSRPPFP…DLGMFPPFSE (140 aa)) are disordered. 2 stretches are compositionally biased toward low complexity: residues 597 to 626 (SSHPYPADPSSYSPLSSPAASSPSGNAYPS) and 653 to 675 (SQWQSQHHGQQSGEQHSHQQPGQ).

In terms of assembly, efficient DNA binding requires dimerization with another bHLH protein. Heterodimer with NPAS4 or SIM1. Heterodimer with the aryl hydrocarbon receptor (AHR) or the SIM1 protein. Interacts with TACC3.

The protein localises to the nucleus. Transcription factor that plays a role in the development of the hypothalamo-pituitary axis, postnatal brain growth, and visual and renal function. Specifically recognizes the xenobiotic response element (XRE). In Rattus norvegicus (Rat), this protein is Aryl hydrocarbon receptor nuclear translocator 2 (Arnt2).